The chain runs to 296 residues: Glucokinase (296 aa).

This sequence belongs to the ROK (NagC/XylR) family. Homodimer. Requires a divalent metal cation as cofactor.

The enzyme catalyses D-glucose + ATP = D-glucose 6-phosphate + ADP + H(+). Catalyzes the phosphorylation of D-glucose to D-glucose 6-phosphate using ATP as the phosphate donor. Has a broad hexose specificity, and in addition to glucose, which shows the highest catalytic efficiency, it can also phosphorylate fructose, mannose, galactose and sorbitol. Can also use CTP, GTP or UTP as phosphoryl donor. This chain is Glucokinase, found in Pyrobaculum calidifontis (strain DSM 21063 / JCM 11548 / VA1).